The chain runs to 160 residues: D-aminoacyl-tRNA deacylase (160 aa).

The Gly-cisPro motif, important for rejection of L-amino acids signature appears at 146–147 (GP).

This sequence belongs to the DTD family. In terms of assembly, homodimer.

Its subcellular location is the cytoplasm. It catalyses the reaction glycyl-tRNA(Ala) + H2O = tRNA(Ala) + glycine + H(+). The catalysed reaction is a D-aminoacyl-tRNA + H2O = a tRNA + a D-alpha-amino acid + H(+). Its function is as follows. An aminoacyl-tRNA editing enzyme that deacylates mischarged D-aminoacyl-tRNAs. Also deacylates mischarged glycyl-tRNA(Ala), protecting cells against glycine mischarging by AlaRS. Acts via tRNA-based rather than protein-based catalysis; rejects L-amino acids rather than detecting D-amino acids in the active site. By recycling D-aminoacyl-tRNA to D-amino acids and free tRNA molecules, this enzyme counteracts the toxicity associated with the formation of D-aminoacyl-tRNA entities in vivo and helps enforce protein L-homochirality. The chain is D-aminoacyl-tRNA deacylase from Desulfovibrio desulfuricans (strain ATCC 27774 / DSM 6949 / MB).